Consider the following 208-residue polypeptide: Protein-L-isoaspartate O-methyltransferase (208 aa).

Residue serine 59 is part of the active site.

Belongs to the methyltransferase superfamily. L-isoaspartyl/D-aspartyl protein methyltransferase family.

It is found in the cytoplasm. It catalyses the reaction [protein]-L-isoaspartate + S-adenosyl-L-methionine = [protein]-L-isoaspartate alpha-methyl ester + S-adenosyl-L-homocysteine. Functionally, catalyzes the methyl esterification of L-isoaspartyl residues in peptides and proteins that result from spontaneous decomposition of normal L-aspartyl and L-asparaginyl residues. It plays a role in the repair and/or degradation of damaged proteins. This is Protein-L-isoaspartate O-methyltransferase from Salmonella arizonae (strain ATCC BAA-731 / CDC346-86 / RSK2980).